Reading from the N-terminus, the 139-residue chain is Trafficking protein particle complex subunit 2-like protein (139 aa).

The protein belongs to the TRAPP small subunits family. Sedlin subfamily. In terms of assembly, component of the multisubunit TRAPP (transport protein particle) complex, which includes at least TRAPPC2, TRAPPC2L, TRAPPC3, TRAPPC3L, TRAPPC4, TRAPPC5, TRAPPC8, TRAPPC9, TRAPPC10, TRAPPC11 and TRAPPC12. Interacts with the heterodimer TRAPPC3-TRAPPC6A.

The protein resides in the cytoplasm. The protein localises to the perinuclear region. It is found in the endoplasmic reticulum. It localises to the golgi apparatus. Its function is as follows. May play a role in vesicular transport from endoplasmic reticulum to Golgi. The chain is Trafficking protein particle complex subunit 2-like protein (Trappc2l) from Mus musculus (Mouse).